Consider the following 291-residue polypeptide: Glycinyltransferase (291 aa).

The active site involves glutamate 243.

Belongs to the thymidine aminotransferase family.

The catalysed reaction is 5-phosphomethyl-dUMP in DNA + glycine = 5-N(alpha)-glycyl-dTMP in DNA + phosphate. Functionally, transfers glycine to 5-phosphomethyl-2'-deoxyuridine (5-PmdU) to produce 5-Nalpha-glycinylthymidine (Nalpha-GlyT) as a step in the pathway leading to thymidine hypermodifications in the viral genome. As a final result of the pathway of hypermodification, 5-aminoethyl-2'-deoxyuridine (5-NedU) substitutes for about 30% of thymidines in the viral DNA. These modifications probably prevent degradation of viral genome by the host restriction-modification antiviral defense system. This Pseudomonas phage M6 protein is Glycinyltransferase.